The chain runs to 308 residues: Methionyl-tRNA formyltransferase (308 aa).

Residue 110–113 (SLLP) coordinates (6S)-5,6,7,8-tetrahydrofolate.

This sequence belongs to the Fmt family.

The enzyme catalyses L-methionyl-tRNA(fMet) + (6R)-10-formyltetrahydrofolate = N-formyl-L-methionyl-tRNA(fMet) + (6S)-5,6,7,8-tetrahydrofolate + H(+). Attaches a formyl group to the free amino group of methionyl-tRNA(fMet). The formyl group appears to play a dual role in the initiator identity of N-formylmethionyl-tRNA by promoting its recognition by IF2 and preventing the misappropriation of this tRNA by the elongation apparatus. The chain is Methionyl-tRNA formyltransferase from Neisseria gonorrhoeae (strain ATCC 700825 / FA 1090).